We begin with the raw amino-acid sequence, 191 residues long: Thymidylate kinase (191 aa).

7-14 provides a ligand contact to ATP; it reads GIDTCGKS.

This sequence belongs to the thymidylate kinase family.

It catalyses the reaction dTMP + ATP = dTDP + ADP. In terms of biological role, phosphorylation of dTMP to form dTDP in both de novo and salvage pathways of dTTP synthesis. This Sulfurovum sp. (strain NBC37-1) protein is Thymidylate kinase.